The following is a 671-amino-acid chain: UvrABC system protein B (671 aa).

Residues 25-412 (EGIDAGLAHQ…AGRIVEQVVR (388 aa)) form the Helicase ATP-binding domain. 38-45 (GVTGSGKT) provides a ligand contact to ATP. The Beta-hairpin signature appears at 91–114 (YYDYYQPEAYVPSSDTFIEKDASI). The 154-residue stretch at 429-582 (QVDDLLSEIH…QIAFNLEHGI (154 aa)) folds into the Helicase C-terminal domain. The segment at 601 to 625 (PGSRSKKRKGMAKAAEESARYENEL) is disordered. The segment covering 614–625 (AAEESARYENEL) has biased composition (basic and acidic residues). In terms of domain architecture, UVR spans 632–667 (NKRIRQLEEKMYQLARDLEFEAAAQMRDEIGKLRER).

This sequence belongs to the UvrB family. As to quaternary structure, forms a heterotetramer with UvrA during the search for lesions. Interacts with UvrC in an incision complex.

The protein localises to the cytoplasm. Functionally, the UvrABC repair system catalyzes the recognition and processing of DNA lesions. A damage recognition complex composed of 2 UvrA and 2 UvrB subunits scans DNA for abnormalities. Upon binding of the UvrA(2)B(2) complex to a putative damaged site, the DNA wraps around one UvrB monomer. DNA wrap is dependent on ATP binding by UvrB and probably causes local melting of the DNA helix, facilitating insertion of UvrB beta-hairpin between the DNA strands. Then UvrB probes one DNA strand for the presence of a lesion. If a lesion is found the UvrA subunits dissociate and the UvrB-DNA preincision complex is formed. This complex is subsequently bound by UvrC and the second UvrB is released. If no lesion is found, the DNA wraps around the other UvrB subunit that will check the other stand for damage. This is UvrABC system protein B from Pseudomonas syringae pv. tomato (strain ATCC BAA-871 / DC3000).